A 198-amino-acid polypeptide reads, in one-letter code: Protein RD3-like (198 aa).

Residues 28–57 (KTLLRELKWHLKERERLIQEIENEQKVKKT) adopt a coiled-coil conformation. Residues 133–168 (GSEQEDLEDSGSMDCSAPSVIQGDSSKRADKDEIPT) are disordered. Residues 157–166 (SSKRADKDEI) show a composition bias toward basic and acidic residues.

This chain is Protein RD3-like (RD3L), found in Homo sapiens (Human).